Consider the following 446-residue polypeptide: Butyryl-CoA:acetate CoA-transferase (446 aa).

220–224 (GIGGM) contacts CoA. Glu245 serves as the catalytic 5-glutamyl coenzyme A thioester intermediate. 3 residues coordinate CoA: Val320, Gly343, and Lys370.

The protein belongs to the acetyl-CoA hydrolase/transferase family. Butyryl-CoA CoA-transferase subfamily.

It catalyses the reaction butanoate + acetyl-CoA = butanoyl-CoA + acetate. The catalysed reaction is propanoate + acetyl-CoA = propanoyl-CoA + acetate. The protein operates within lipid metabolism; butanoate metabolism. Functionally, coenzyme A-transferase that converts butyryl-CoA to butyrate. Can also use proprionyl-CoA as substrate in vitro. The sequence is that of Butyryl-CoA:acetate CoA-transferase from Anaerostipes caccae (strain DSM 14662 / CCUG 47493 / JCM 13470 / NCIMB 13811 / L1-92).